A 490-amino-acid chain; its full sequence is Ribosome biogenesis protein YTM1 (490 aa).

The segment at 1-22 (MDGLEDGPLDASTATSQKPQRQ) is disordered. A ubiquitin-like (UBL) domain region spans residues 23 to 104 (VRLKLTSRHE…ETTLDVEYVR (82 aa)). WD repeat units follow at residues 116–168 (LHDD…IALS), 175–213 (GHTA…DGFS), 224–263 (GHKG…NPAA), 298–338 (SHTA…LVDT), 340–379 (TASH…TTVS), 385–425 (GHTN…TDKD), and 449–487 (GEGV…PNGG). The disordered stretch occupies residues 255–286 (TRKSENPAAPESLLPSNTSRSSKRRKLNSSVS).

It belongs to the WD repeat WDR12/YTM1 family. Component of the NOP7 complex, composed of ERB1, NOP7 and YTM1. The complex is held together by ERB1, which interacts with NOP7 via its N-terminal domain and with YTM1 via a high-affinity interaction between the seven-bladed beta-propeller domains of the 2 proteins. The NOP7 complex associates with the 66S pre-ribosome. Interacts (via UBL domain) with MDN1 (via VWFA/MIDAS domain).

The protein resides in the nucleus. The protein localises to the nucleolus. It is found in the nucleoplasm. Functionally, component of the NOP7 complex, which is required for maturation of the 25S and 5.8S ribosomal RNAs and formation of the 60S ribosome. The sequence is that of Ribosome biogenesis protein YTM1 from Ajellomyces capsulatus (strain NAm1 / WU24) (Darling's disease fungus).